The sequence spans 896 residues: Lipoxygenase 2, chloroplastic (896 aa).

A chloroplast-targeting transit peptide spans methionine 1–arginine 56. The 121-residue stretch at isoleucine 79–serine 199 folds into the PLAT domain. The EIF4E2 binding stretch occupies residues glycine 175–glycine 232. Positions serine 202–isoleucine 896 constitute a Lipoxygenase domain. Residues histidine 554, histidine 559, histidine 746, asparagine 750, and isoleucine 896 each coordinate Fe cation.

This sequence belongs to the lipoxygenase family. As to quaternary structure, interacts with EIF4E2. Fe cation is required as a cofactor. In leaves and inflorescences but not abundant in seeds, roots and stems.

Its subcellular location is the plastid. The protein resides in the chloroplast. It is found in the cytoplasm. It carries out the reaction (9Z,12Z)-octadecadienoate + O2 = (13S)-hydroperoxy-(9Z,11E)-octadecadienoate. The catalysed reaction is (9Z,12Z,15Z)-octadecatrienoate + O2 = (13S)-hydroperoxy-(9Z,11E,15Z)-octadecatrienoate. The protein operates within lipid metabolism; oxylipin biosynthesis. Its function is as follows. 13S-lipoxygenase that can use linolenic acid as substrates. Plant lipoxygenases may be involved in a number of diverse aspects of plant physiology including growth and development, pest resistance, and senescence or responses to wounding. Catalyzes the hydroperoxidation of lipids containing a cis,cis-1,4-pentadiene structure. Required for the wound-induced synthesis of jasmonic acid (JA) in leaves. The protein is Lipoxygenase 2, chloroplastic (LOX2) of Arabidopsis thaliana (Mouse-ear cress).